Reading from the N-terminus, the 192-residue chain is Large ribosomal subunit protein bL25 (192 aa).

The protein belongs to the bacterial ribosomal protein bL25 family. CTC subfamily. In terms of assembly, part of the 50S ribosomal subunit; part of the 5S rRNA/L5/L18/L25 subcomplex. Contacts the 5S rRNA. Binds to the 5S rRNA independently of L5 and L18.

In terms of biological role, this is one of the proteins that binds to the 5S RNA in the ribosome where it forms part of the central protuberance. This is Large ribosomal subunit protein bL25 from Solidesulfovibrio magneticus (strain ATCC 700980 / DSM 13731 / RS-1) (Desulfovibrio magneticus).